A 248-amino-acid chain; its full sequence is 2,3-bisphosphoglycerate-dependent phosphoglycerate mutase (248 aa).

Substrate contacts are provided by residues 8 to 15, 21 to 22, Arg60, 87 to 90, Lys98, 114 to 115, and 183 to 184; these read RHGESEWN, TG, ERHY, RR, and GN. Catalysis depends on His9, which acts as the Tele-phosphohistidine intermediate. The active-site Proton donor/acceptor is the Glu87.

The protein belongs to the phosphoglycerate mutase family. BPG-dependent PGAM subfamily.

It catalyses the reaction (2R)-2-phosphoglycerate = (2R)-3-phosphoglycerate. It participates in carbohydrate degradation; glycolysis; pyruvate from D-glyceraldehyde 3-phosphate: step 3/5. In terms of biological role, catalyzes the interconversion of 2-phosphoglycerate and 3-phosphoglycerate. The polypeptide is 2,3-bisphosphoglycerate-dependent phosphoglycerate mutase (Borrelia hermsii (strain HS1 / DAH)).